Consider the following 444-residue polypeptide: Ribulose bisphosphate carboxylase (444 aa).

Lys163 (proton acceptor) is an active-site residue. Lys165 is a binding site for substrate. Lys189, Asp191, and Glu192 together coordinate Mg(2+). The residue at position 189 (Lys189) is an N6-carboxylysine. The active-site Proton acceptor is His281. Residues Arg282, His314, 367 to 369, and 389 to 392 each bind substrate; these read SGG and QLGG.

It belongs to the RuBisCO large chain family. Type III subfamily. Homodimer or homodecamer. In contrast to form I RuBisCO, the form III RuBisCO is composed solely of large subunits. Mg(2+) serves as cofactor.

The enzyme catalyses 2 (2R)-3-phosphoglycerate + 2 H(+) = D-ribulose 1,5-bisphosphate + CO2 + H2O. It carries out the reaction D-ribulose 1,5-bisphosphate + O2 = 2-phosphoglycolate + (2R)-3-phosphoglycerate + 2 H(+). In terms of biological role, catalyzes the addition of molecular CO(2) and H(2)O to ribulose 1,5-bisphosphate (RuBP), generating two molecules of 3-phosphoglycerate (3-PGA). Functions in an archaeal AMP degradation pathway, together with AMP phosphorylase and R15P isomerase. The chain is Ribulose bisphosphate carboxylase from Thermococcus onnurineus (strain NA1).